The following is a 173-amino-acid chain: Small ribosomal subunit protein uS5 (173 aa).

Residues 17 to 80 form the S5 DRBM domain; that stretch reads WQERVIQIRR…ADGKKQLIEV (64 aa).

It belongs to the universal ribosomal protein uS5 family. In terms of assembly, part of the 30S ribosomal subunit. Contacts proteins S4 and S8.

With S4 and S12 plays an important role in translational accuracy. In terms of biological role, located at the back of the 30S subunit body where it stabilizes the conformation of the head with respect to the body. The protein is Small ribosomal subunit protein uS5 of Gloeothece citriformis (strain PCC 7424) (Cyanothece sp. (strain PCC 7424)).